A 299-amino-acid polypeptide reads, in one-letter code: ATP phosphoribosyltransferase (299 aa).

It belongs to the ATP phosphoribosyltransferase family. Long subfamily. Requires Mg(2+) as cofactor.

It is found in the cytoplasm. The enzyme catalyses 1-(5-phospho-beta-D-ribosyl)-ATP + diphosphate = 5-phospho-alpha-D-ribose 1-diphosphate + ATP. Its pathway is amino-acid biosynthesis; L-histidine biosynthesis; L-histidine from 5-phospho-alpha-D-ribose 1-diphosphate: step 1/9. Feedback inhibited by histidine. Catalyzes the condensation of ATP and 5-phosphoribose 1-diphosphate to form N'-(5'-phosphoribosyl)-ATP (PR-ATP). Has a crucial role in the pathway because the rate of histidine biosynthesis seems to be controlled primarily by regulation of HisG enzymatic activity. The protein is ATP phosphoribosyltransferase of Campylobacter lari (strain RM2100 / D67 / ATCC BAA-1060).